We begin with the raw amino-acid sequence, 359 residues long: Squamosa promoter-binding-like protein 13A (359 aa).

Residues Ala75–Gly94 are disordered. Residues Met98–Pro175 form an SBP-type zinc finger. Positions 101, 106, 123, 126, 142, 145, 149, and 161 each coordinate Zn(2+). The short motif at Lys158–Lys174 is the Bipartite nuclear localization signal element.

Zn(2+) serves as cofactor.

It localises to the nucleus. In terms of biological role, trans-acting factor that binds specifically to the consensus nucleotide sequence 5'-TNCGTACAA-3'. This chain is Squamosa promoter-binding-like protein 13A (SPL13A), found in Arabidopsis thaliana (Mouse-ear cress).